The sequence spans 157 residues: Receptor activity-modifying protein 2 (157 aa).

Residues 1–24 (MAARLRPLLALLALAALCPQETLA) form the signal peptide. The Extracellular segment spans residues 25 to 125 (QPLPTTDTWK…EQPTLCDPPE (101 aa)). 2 disulfide bridges follow: Cys50–Cys81 and Cys66–Cys113. N-linked (GlcNAc...) asparagine glycosylation is found at Asn67 and Asn112. Residues 126-147 (DVLLAMIIAPICLIPFFVTLVV) form a helical membrane-spanning segment. Topologically, residues 148–157 (WRSKGTELKT) are cytoplasmic.

This sequence belongs to the RAMP family. Heterodimer of CALCRL and RAMP2; the interaction forms the receptor complex for adrenomedullin/ADM. Heterodimer of CALCR and RAMP2; interaction forms the AMYR2 receptor complex for calcitonin/CALC and amylin/IAPP.

It is found in the cell membrane. Its function is as follows. Accessory protein that interacts with and modulates the function of G-protein coupled receptors including calcitonin gene-related peptide type 1 receptor (CALCRL) and calcitonin receptor (CALCR). Required for the transport of CALCRL to the plasma membrane. Together with CALCRL, form a receptor complex for adrenomedullin/ADM. Together with CALCR, act as a receptor complex for calcitonin/CT/CALC. Together with CALCR, also act as a receptor complex for amylin/IAPP. The polypeptide is Receptor activity-modifying protein 2 (RAMP2) (Cavia porcellus (Guinea pig)).